Consider the following 2603-residue polypeptide: Ankyrin repeat domain-containing protein 17 (2603 aa).

The residue at position 1 (Met-1) is an N-acetylmethionine. A compositionally biased stretch (low complexity) spans 1 to 32 (MEKATVPAAAEGEGSPPAAAAVAAPPAAAAAE). The segment at 1–127 (MEKATVPAAA…DDDEEEEVSE (127 aa)) is disordered. Phosphoserine is present on residues Ser-15 and Ser-42. Over residues 68–77 (PHHKAKRNRT) the composition is skewed to basic residues. A compositionally biased stretch (low complexity) spans 82-92 (SSSESSSDSDN). Residues 93–107 (SGGGGGGGGGGGGGT) are compositionally biased toward gly residues. Residues 112 to 127 (SEEEEDDDDEEEEVSE) show a composition bias toward acidic residues. Ser-152 is modified (phosphoserine). ANK repeat units follow at residues 229–258 (SDNR…SVNE), 262–291 (EGES…NVED), 296–325 (GDIT…DVNA), 329–358 (TGNT…SIED), 362–391 (NGHT…GINT), 396–425 (FKES…DQEH), 429–458 (EMHT…QVNM), 462–491 (SFES…SLEE), 495–524 (EGYT…NINA), 529–558 (TQET…DIEL), 559–588 (GCST…NVHA), 592–621 (TGDT…DLEH), 625–654 (GGRT…NVNR), 659–688 (NDHT…DPTH), and 692–721 (DGST…NLLA). Lys-314 participates in a covalent cross-link: Glycyl lysine isopeptide (Lys-Gly) (interchain with G-Cter in SUMO2). Positions 770 to 792 (VRSKAASKQKSNSHLPANSQDVQ) are disordered. The segment covering 775-792 (ASKQKSNSHLPANSQDVQ) has biased composition (polar residues). The residue at position 799 (Ser-799) is a Phosphoserine. ANK repeat units lie at residues 1078-1107 (NHDT…SIEH), 1111-1140 (KGFT…DIEA), 1145-1174 (TKDT…NKEH), 1178-1207 (SDYT…EINS), 1213-1242 (LGIS…DINA), 1247-1276 (NRNT…NVEH), 1280-1309 (TGLT…DVNA), 1315-1344 (SRDT…HIDV), 1348-1377 (KGNT…DVDA), and 1381-1410 (RKIT…QFPS). Residues 1438-1522 (VQAKDRQAAE…EKEKLKVEEE (85 aa)) are a coiled coil. Ser-1453 is modified (phosphoserine). 2 disordered regions span residues 1475 to 1496 (AKRE…RKLE) and 1513 to 1713 (EKEK…PKRE). Positions 1477–1487 (REKRKEKRRKK) are enriched in basic residues. Low complexity-rich tracts occupy residues 1526 to 1546 (LTEP…TWTT), 1598 to 1607 (ESKSSSTSES), and 1616 to 1636 (SSCS…NHAS). At Ser-1631 the chain carries Phosphoserine. Composition is skewed to polar residues over residues 1638 to 1648 (VVTTTMASKKQ) and 1671 to 1699 (LSET…SPNG). 3 positions are modified to phosphoserine: Ser-1692, Ser-1696, and Ser-1705. The KH domain occupies 1721-1785 (RRSKKVSVPS…ESTRQATQLI (65 aa)). Position 1870 is an asymmetric dimethylarginine (Arg-1870). 3 disordered regions span residues 1902-1991 (PRLP…PSVR), 2007-2195 (TTVT…SSSA), and 2269-2327 (VSSQ…YGSV). Composition is skewed to low complexity over residues 1946 to 1989 (SNQN…SSPS) and 2007 to 2024 (TTVT…TNAT). Ser-2038, Ser-2040, Ser-2041, Ser-2043, Ser-2055, and Ser-2063 each carry phosphoserine. Low complexity-rich tracts occupy residues 2068 to 2077 (ASASEQEASS), 2087 to 2108 (RPPH…QQPP), and 2175 to 2189 (PPSH…TPAP). Polar residues predominate over residues 2269–2298 (VSSQSTPESMLSGKSSYLPNSDPLHQSDTS). The span at 2303 to 2313 (FRPPLQRPAPS) shows a compositional bias: pro residues. Position 2373 is a phosphoserine (Ser-2373). The interval 2378–2447 (LTPCSSASNE…TGTSAPSVIG (70 aa)) is disordered. The segment covering 2379–2391 (TPCSSASNESPAQ) has biased composition (polar residues). A compositionally biased stretch (low complexity) spans 2392 to 2411 (SVSSGVRAPSPAPSSVPLGS). The residue at position 2401 (Ser-2401) is a Phosphoserine. Residues 2435–2447 (IRQTGTSAPSVIG) show a composition bias toward polar residues.

In terms of assembly, interacts (via N-terminus) with NOD2. Interacts with CDK2, MCM3, MCM5, MCM7, CDC6 and PCNA. Interacts with MAVS and IFIH1. Interacts (via the second ankyrin repeat cluster) with RIGI. In terms of processing, phosphorylated by CDK2. In terms of tissue distribution, highly expressed in fetal liver. Detected in adult liver cells, ovarian oocytes, seminiferous tubules of the testes and pelvic region of the kidney. It was not detected in heart, gut, lung, spleen and skeletal muscle. Earliest specific in situ marker of hepatic differentiation during embryogenesis, useful for characterization of inductive events involved in hepatic specification.

Its subcellular location is the cytoplasm. The protein localises to the nucleus. Its function is as follows. Could play pivotal roles in cell cycle and DNA regulation. Involved in innate immune defense against viruse by positively regulating the viral dsRNA receptors RIGI and IFIH1 signaling pathways. Involves in NOD2- and NOD1-mediated responses to bacteria suggesting a role in innate antibacterial immune pathways too. Could play a central role for the formation and/or maintenance of the blood vessels of the circulation system. This is Ankyrin repeat domain-containing protein 17 (Ankrd17) from Mus musculus (Mouse).